The following is a 124-amino-acid chain: UPF0231 protein Shewmr7_3366 (124 aa).

The protein belongs to the UPF0231 family.

The sequence is that of UPF0231 protein Shewmr7_3366 from Shewanella sp. (strain MR-7).